A 204-amino-acid polypeptide reads, in one-letter code: Ras-related protein R-Ras2 (204 aa).

Alanine 2 bears the N-acetylalanine mark. 21–29 contributes to the GTP binding site; that stretch reads GGGGVGKSA. The Effector region signature appears at 43–51; it reads YDPTIEDSY. GTP contacts are provided by residues 68-72, 127-130, and 157-159; these read DTAGQ, NKAD, and SAK. Serine 186 is subject to Phosphoserine. Residues lysine 192, lysine 194, lysine 196, and lysine 197 are each lipidated (N6-palmitoyl lysine). Cysteine 199 is lipidated: S-palmitoyl cysteine. Position 201 is a cysteine methyl ester (cysteine 201). Cysteine 201 carries S-farnesyl cysteine lipidation. Positions 202 to 204 are cleaved as a propeptide — removed in mature form; that stretch reads VIF.

It belongs to the small GTPase superfamily. Ras family. In terms of assembly, interacts with RASSF5. Post-translationally, may be post-translationally modified by both palmitoylation and polyisoprenylation. Fatty-acylation at Lys-192, Lys-194; lys-196 and Lys-197 is required for localization to the plasma membrane and activity. Defatty-acylated by SIRT6, affecting its localization to the plasma membrane. As to expression, ubiquitously present in all tissues examined, with the highest levels in heart, placenta, and skeletal muscle. Moderate levels in lung and liver; low levels in brain, kidney, and pancreas.

It localises to the cell membrane. Its subcellular location is the golgi apparatus membrane. It catalyses the reaction GTP + H2O = GDP + phosphate + H(+). Its function is as follows. GTP-binding protein with GTPase activity, involved in the regulation of MAPK signaling pathway and thereby controlling multiple cellular processes. Regulates craniofacial development. The chain is Ras-related protein R-Ras2 from Homo sapiens (Human).